A 156-amino-acid chain; its full sequence is ATP synthase subunit b (156 aa).

The helical transmembrane segment at 7-27 (LFAQMVVFLILAWFTMKFVWP) threads the bilayer.

It belongs to the ATPase B chain family. As to quaternary structure, F-type ATPases have 2 components, F(1) - the catalytic core - and F(0) - the membrane proton channel. F(1) has five subunits: alpha(3), beta(3), gamma(1), delta(1), epsilon(1). F(0) has three main subunits: a(1), b(2) and c(10-14). The alpha and beta chains form an alternating ring which encloses part of the gamma chain. F(1) is attached to F(0) by a central stalk formed by the gamma and epsilon chains, while a peripheral stalk is formed by the delta and b chains.

The protein localises to the cell inner membrane. In terms of biological role, f(1)F(0) ATP synthase produces ATP from ADP in the presence of a proton or sodium gradient. F-type ATPases consist of two structural domains, F(1) containing the extramembraneous catalytic core and F(0) containing the membrane proton channel, linked together by a central stalk and a peripheral stalk. During catalysis, ATP synthesis in the catalytic domain of F(1) is coupled via a rotary mechanism of the central stalk subunits to proton translocation. Component of the F(0) channel, it forms part of the peripheral stalk, linking F(1) to F(0). In Paraburkholderia phymatum (strain DSM 17167 / CIP 108236 / LMG 21445 / STM815) (Burkholderia phymatum), this protein is ATP synthase subunit b.